The sequence spans 541 residues: Chaperonin GroEL (541 aa).

Residues 29–32 (TLGP), 86–90 (DGTTT), Gly413, 476–478 (NAA), and Asp492 contribute to the ATP site. The segment at 521–541 (KPEDNPAPAAPAANPGMGGMM) is disordered. Residues 526–535 (PAPAAPAANP) are compositionally biased toward low complexity.

This sequence belongs to the chaperonin (HSP60) family. As to quaternary structure, forms a cylinder of 14 subunits composed of two heptameric rings stacked back-to-back. Interacts with the co-chaperonin GroES.

Its subcellular location is the cytoplasm. The enzyme catalyses ATP + H2O + a folded polypeptide = ADP + phosphate + an unfolded polypeptide.. Its function is as follows. Together with its co-chaperonin GroES, plays an essential role in assisting protein folding. The GroEL-GroES system forms a nano-cage that allows encapsulation of the non-native substrate proteins and provides a physical environment optimized to promote and accelerate protein folding. The polypeptide is Chaperonin GroEL (Levilactobacillus brevis (strain ATCC 367 / BCRC 12310 / CIP 105137 / JCM 1170 / LMG 11437 / NCIMB 947 / NCTC 947) (Lactobacillus brevis)).